The chain runs to 976 residues: 5'-3' exoribonuclease 2 homolog (976 aa).

The segment at 264–281 adopts a CCHC-type zinc-finger fold; that stretch reads RACELCGQYGHELKECRG. The segment covering 411–420 has biased composition (basic and acidic residues); that stretch reads DEERFKENQK. The tract at residues 411 to 442 is disordered; sequence DEERFKENQKNKKARMQQYGRGRGGRGRGRGQ. Residues 535 to 788 are interaction with paxt-1; that stretch reads DIRLYESGWK…GICVLYEDPE (254 aa). The segment at 815 to 976 is disordered; that stretch reads WNERRDGRFN…GGYQGNSSWR (162 aa). A compositionally biased stretch (low complexity) spans 856–866; that stretch reads DRQGGNDNYRG.

Belongs to the 5'-3' exonuclease family. XRN2/RAT1 subfamily. As to quaternary structure, interacts with paxt-1 (via N-terminus); the interaction is direct and results in stabilization of xrn-2 in the complex.

The protein resides in the nucleus. Its function is as follows. Possesses 5'-&gt;3' exoribonuclease activity. Plays a role in maintenance of steady-state concentration and turnover of microRNAs (miRNA) by degradation of mature miRNA. Degradation role is enhanced when in complex with paxt-1. Partially redundant to xrn-1 in miRNA guide strand degradation. Implicated in differential regulation of mRNAs such as let-7 by controlling the accumulation of mature miRNA. Positively regulates molting of the pharyngeal cuticle. The polypeptide is 5'-3' exoribonuclease 2 homolog (Caenorhabditis briggsae).